Here is a 258-residue protein sequence, read N- to C-terminus: Global transcriptional regulator CodY (258 aa).

Residues 1 to 156 (MSSLLDKTRM…SATIIGLEIL (156 aa)) form a GAF domain region. Residues 204–223 (ASKIADKVGITRSVIVNALR) constitute a DNA-binding region (H-T-H motif).

It belongs to the CodY family.

The protein resides in the cytoplasm. Its function is as follows. DNA-binding global transcriptional regulator which is involved in the adaptive response to starvation and acts by directly or indirectly controlling the expression of numerous genes in response to nutrient availability. During rapid exponential growth, CodY is highly active and represses genes whose products allow adaptation to nutrient depletion. The sequence is that of Global transcriptional regulator CodY from Clostridium botulinum (strain ATCC 19397 / Type A).